A 96-amino-acid chain; its full sequence is Small ribosomal subunit protein bS6 (96 aa).

The protein belongs to the bacterial ribosomal protein bS6 family.

Functionally, binds together with bS18 to 16S ribosomal RNA. The chain is Small ribosomal subunit protein bS6 from Streptococcus pneumoniae serotype 19F (strain G54).